Reading from the N-terminus, the 957-residue chain is Glycine dehydrogenase (decarboxylating) (957 aa).

Lysine 708 carries the N6-(pyridoxal phosphate)lysine modification.

Belongs to the GcvP family. As to quaternary structure, the glycine cleavage system is composed of four proteins: P, T, L and H. Pyridoxal 5'-phosphate serves as cofactor.

It catalyses the reaction N(6)-[(R)-lipoyl]-L-lysyl-[glycine-cleavage complex H protein] + glycine + H(+) = N(6)-[(R)-S(8)-aminomethyldihydrolipoyl]-L-lysyl-[glycine-cleavage complex H protein] + CO2. Its function is as follows. The glycine cleavage system catalyzes the degradation of glycine. The P protein binds the alpha-amino group of glycine through its pyridoxal phosphate cofactor; CO(2) is released and the remaining methylamine moiety is then transferred to the lipoamide cofactor of the H protein. In Escherichia coli O7:K1 (strain IAI39 / ExPEC), this protein is Glycine dehydrogenase (decarboxylating).